Here is a 334-residue protein sequence, read N- to C-terminus: L-lactate dehydrogenase (334 aa).

Residues 1–22 (MASTKGKLIHEMVPSKERDPPH) are disordered. A compositionally biased stretch (basic and acidic residues) spans 8–22 (LIHEMVPSKERDPPH). NAD(+) is bound by residues 31 to 59 (GQVG…VEDR) and Arg101. Substrate-binding residues include Arg108, Asn140, and Arg171. Asn140 is a binding site for NAD(+). His195 acts as the Proton acceptor in catalysis. Thr250 contacts substrate.

Belongs to the LDH/MDH superfamily. LDH family. As to quaternary structure, homotetramer.

The protein localises to the cytoplasm. The enzyme catalyses (S)-lactate + NAD(+) = pyruvate + NADH + H(+). Its pathway is fermentation; pyruvate fermentation to lactate; (S)-lactate from pyruvate: step 1/1. The protein is L-lactate dehydrogenase of Petromyzon marinus (Sea lamprey).